A 215-amino-acid chain; its full sequence is Somatotropin (215 aa).

The signal sequence occupies residues 1-25 (MAPGMRVCLLLLIAFTLLGPQRAAA). Residue H44 participates in Zn(2+) binding. The residue at position 130 (S130) is a Phosphoserine. Position 197 (E197) interacts with Zn(2+).

This sequence belongs to the somatotropin/prolactin family.

It is found in the secreted. Plays an important role in growth control. Its major role in stimulating body growth is to stimulate the liver and other tissues to secrete IGF1. It stimulates both the differentiation and proliferation of myoblasts. It also stimulates amino acid uptake and protein synthesis in muscle and other tissues. This chain is Somatotropin (GH1), found in Monodelphis domestica (Gray short-tailed opossum).